The sequence spans 362 residues: 3-dehydroquinate synthase (362 aa).

Residues 71-76 (DGEQYK), 105-109 (GVVGD), 129-130 (TT), lysine 142, lysine 151, and 169-172 (CLKT) each bind NAD(+). Glutamate 184, histidine 247, and histidine 264 together coordinate Zn(2+).

It belongs to the sugar phosphate cyclases superfamily. Dehydroquinate synthase family. Requires Co(2+) as cofactor. Zn(2+) serves as cofactor. The cofactor is NAD(+).

The protein localises to the cytoplasm. The enzyme catalyses 7-phospho-2-dehydro-3-deoxy-D-arabino-heptonate = 3-dehydroquinate + phosphate. It functions in the pathway metabolic intermediate biosynthesis; chorismate biosynthesis; chorismate from D-erythrose 4-phosphate and phosphoenolpyruvate: step 2/7. In terms of biological role, catalyzes the conversion of 3-deoxy-D-arabino-heptulosonate 7-phosphate (DAHP) to dehydroquinate (DHQ). This is 3-dehydroquinate synthase from Escherichia coli O6:K15:H31 (strain 536 / UPEC).